A 141-amino-acid polypeptide reads, in one-letter code: Ribonuclease P protein component (141 aa).

Residues 114–134 (RRIKAKGERRGDGKRRTERPE) show a composition bias toward basic and acidic residues. The disordered stretch occupies residues 114-141 (RRIKAKGERRGDGKRRTERPESGPVNGK).

It belongs to the RnpA family. Consists of a catalytic RNA component (M1 or rnpB) and a protein subunit.

The enzyme catalyses Endonucleolytic cleavage of RNA, removing 5'-extranucleotides from tRNA precursor.. In terms of biological role, RNaseP catalyzes the removal of the 5'-leader sequence from pre-tRNA to produce the mature 5'-terminus. It can also cleave other RNA substrates such as 4.5S RNA. The protein component plays an auxiliary but essential role in vivo by binding to the 5'-leader sequence and broadening the substrate specificity of the ribozyme. This is Ribonuclease P protein component from Brucella anthropi (strain ATCC 49188 / DSM 6882 / CCUG 24695 / JCM 21032 / LMG 3331 / NBRC 15819 / NCTC 12168 / Alc 37) (Ochrobactrum anthropi).